The primary structure comprises 1240 residues: DNA-directed RNA polymerase subunit beta (1240 aa).

It belongs to the RNA polymerase beta chain family. In terms of assembly, the RNAP catalytic core consists of 2 alpha, 1 beta, 1 beta' and 1 omega subunit. When a sigma factor is associated with the core the holoenzyme is formed, which can initiate transcription.

It catalyses the reaction RNA(n) + a ribonucleoside 5'-triphosphate = RNA(n+1) + diphosphate. DNA-dependent RNA polymerase catalyzes the transcription of DNA into RNA using the four ribonucleoside triphosphates as substrates. This Rhodopirellula baltica (strain DSM 10527 / NCIMB 13988 / SH1) protein is DNA-directed RNA polymerase subunit beta.